We begin with the raw amino-acid sequence, 308 residues long: Ribosomal RNA small subunit methyltransferase H (308 aa).

S-adenosyl-L-methionine contacts are provided by residues 34–36, Asp-54, Phe-85, Asp-99, and Gln-106; that span reads GGH.

The protein belongs to the methyltransferase superfamily. RsmH family.

It is found in the cytoplasm. It catalyses the reaction cytidine(1402) in 16S rRNA + S-adenosyl-L-methionine = N(4)-methylcytidine(1402) in 16S rRNA + S-adenosyl-L-homocysteine + H(+). Functionally, specifically methylates the N4 position of cytidine in position 1402 (C1402) of 16S rRNA. The sequence is that of Ribosomal RNA small subunit methyltransferase H from Dichelobacter nodosus (strain VCS1703A).